The chain runs to 179 residues: Signal peptidase complex catalytic subunit SEC11A (179 aa).

Residues 1 to 16 (MLSLDFLDDVRRMNKR) are Cytoplasmic-facing. Residues 17 to 36 (QLYYQVLNFGMIVSSALMIW) traverse the membrane as a helical; Signal-anchor for type II membrane protein segment. At 37 to 179 (KGLMLITGSE…LGLFVLVHRE (143 aa)) the chain is on the lumenal side. Active-site charge relay system residues include Ser-56, His-96, and Asp-122. Positions 165–176 (AVLFLLGLFVLV) are C-terminal short (CTS) helix.

It belongs to the peptidase S26B family. Component of the signal peptidase complex paralog A (SPC-A) composed of a catalytic subunit SEC11A and three accessory subunits SPCS1, SPCS2 and SPCS3. Within the complex, interacts with SPCS2 and SPCS3. The complex induces a local thinning of the ER membrane which is used to measure the length of the signal peptide (SP) h-region of protein substrates. This ensures the selectivity of the complex towards h-regions shorter than 18-20 amino acids.

The protein localises to the endoplasmic reticulum membrane. The catalysed reaction is Cleavage of hydrophobic, N-terminal signal or leader sequences from secreted and periplasmic proteins.. Its function is as follows. Catalytic component of the signal peptidase complex (SPC) which catalyzes the cleavage of N-terminal signal sequences from nascent proteins as they are translocated into the lumen of the endoplasmic reticulum. Specifically cleaves N-terminal signal peptides that contain a hydrophobic alpha-helix (h-region) shorter than 18-20 amino acids. This Rattus norvegicus (Rat) protein is Signal peptidase complex catalytic subunit SEC11A (Sec11a).